Reading from the N-terminus, the 1363-residue chain is Spike glycoprotein (1363 aa).

The signal sequence occupies residues 1 to 13 (MFLILLISLPTAF). The Extracellular segment spans residues 14 to 1307 (AVIGDLKCTT…GTYEYYVKWP (1294 aa)). A BetaCoV S1-NTD domain is found at 15–298 (VIGDLKCTTV…DFMSEIKCKT (284 aa)). 5 cysteine pairs are disulfide-bonded: cysteine 21/cysteine 165, cysteine 160/cysteine 193, cysteine 172/cysteine 252, cysteine 286/cysteine 296, and cysteine 331/cysteine 356. 2 N-linked (GlcNAc...) asparagine; by host glycosylation sites follow: asparagine 59 and asparagine 133. Residue asparagine 198 is glycosylated (N-linked (GlcNAc...) asparagine; by host). Residues 329–617 (PDCNIEAWLN…DVNSGTTCST (289 aa)) form the BetaCoV S1-CTD domain. Asparagine 359 carries an N-linked (GlcNAc...) asparagine; by host glycan. Disulfide bonds link cysteine 374-cysteine 427 and cysteine 386-cysteine 615. Asparagine 437, asparagine 649, asparagine 676, asparagine 696, asparagine 714, asparagine 739, and asparagine 788 each carry an N-linked (GlcNAc...) asparagine; by host glycan. Fusion peptide stretches follow at residues 914 to 935 (SAIEDLLFSKVKLSDVGFVEAY) and 933 to 953 (EAYNNCTGGAEIRDLICVQSY). Asparagine 937 carries an N-linked (GlcNAc...) asparagine; by host glycan. The cysteines at positions 938 and 949 are disulfide-linked. The segment at 1014–1064 (QKLIANAFNNALGAIQEGFDATNSALVKIQAVVNANAEALNNLLQQLSNRF) is heptad repeat 1. Residues 1043-1087 (QAVVNANAEALNNLLQQLSNRFGAISSSLQEILSRLDALEAQAQI) adopt a coiled-coil conformation. Residues asparagine 1194, asparagine 1224, asparagine 1234, asparagine 1253, asparagine 1267, and asparagine 1288 are each glycosylated (N-linked (GlcNAc...) asparagine; by host). The segment at 1258–1296 (APDLSLDYINVTFLDLQDEMNRLQEAIKVLNQSYINLKD) is heptad repeat 2. Residues 1269–1297 (TFLDLQDEMNRLQEAIKVLNQSYINLKDI) are a coiled coil. A helical transmembrane segment spans residues 1308–1328 (WYVWLLIGFAGVAMLVLLFFI). Residues 1329–1363 (CCCTGCGTSCFKKCGGCCDDYTGHQELVIKTSHDD) lie on the Cytoplasmic side of the membrane. The KxHxx motif lies at 1359–1363 (TSHDD).

It belongs to the betacoronaviruses spike protein family. As to quaternary structure, homotrimer; each monomer consists of a S1 and a S2 subunit. The resulting peplomers protrude from the virus surface as spikes. Post-translationally, specific enzymatic cleavages in vivo yield mature proteins. The precursor is processed into S1 and S2 by host cell furin or another cellular protease to yield the mature S1 and S2 proteins. Additionally, a second cleavage leads to the release of a fusion peptide after viral attachment to host cell receptor. The cytoplasmic Cys-rich domain is palmitoylated. Spike glycoprotein is digested within host endosomes.

The protein localises to the virion membrane. Its subcellular location is the host endoplasmic reticulum-Golgi intermediate compartment membrane. It is found in the host cell membrane. Its function is as follows. Attaches the virion to the cell membrane by interacting with host receptor, initiating the infection. Functionally, mediates fusion of the virion and cellular membranes by acting as a class I viral fusion protein. Under the current model, the protein has at least three conformational states: pre-fusion native state, pre-hairpin intermediate state, and post-fusion hairpin state. During viral and target cell membrane fusion, the coiled coil regions (heptad repeats) assume a trimer-of-hairpins structure, positioning the fusion peptide in close proximity to the C-terminal region of the ectodomain. The formation of this structure appears to drive apposition and subsequent fusion of viral and target cell membranes. Acts as a viral fusion peptide which is unmasked following S2 cleavage occurring upon virus endocytosis. The chain is Spike glycoprotein from Bovine coronavirus (strain LSU-94LSS-051) (BCoV-LSU).